The chain runs to 251 residues: Urease accessory protein UreF (251 aa).

Positions 1-20 (MAPAPDPAPAGSAAPDPASA) are disordered. Positions 9 to 20 (PAGSAAPDPASA) are enriched in low complexity.

Belongs to the UreF family. As to quaternary structure, ureD, UreF and UreG form a complex that acts as a GTP-hydrolysis-dependent molecular chaperone, activating the urease apoprotein by helping to assemble the nickel containing metallocenter of UreC. The UreE protein probably delivers the nickel.

Its subcellular location is the cytoplasm. Required for maturation of urease via the functional incorporation of the urease nickel metallocenter. This Paracidovorax citrulli (strain AAC00-1) (Acidovorax citrulli) protein is Urease accessory protein UreF.